A 414-amino-acid polypeptide reads, in one-letter code: Serine hydroxymethyltransferase (414 aa).

(6S)-5,6,7,8-tetrahydrofolate is bound by residues leucine 121 and 125–127 (GHL). At lysine 229 the chain carries N6-(pyridoxal phosphate)lysine.

This sequence belongs to the SHMT family. Homodimer. Pyridoxal 5'-phosphate serves as cofactor.

The protein localises to the cytoplasm. It catalyses the reaction (6R)-5,10-methylene-5,6,7,8-tetrahydrofolate + glycine + H2O = (6S)-5,6,7,8-tetrahydrofolate + L-serine. It participates in one-carbon metabolism; tetrahydrofolate interconversion. Its pathway is amino-acid biosynthesis; glycine biosynthesis; glycine from L-serine: step 1/1. Its function is as follows. Catalyzes the reversible interconversion of serine and glycine with tetrahydrofolate (THF) serving as the one-carbon carrier. This reaction serves as the major source of one-carbon groups required for the biosynthesis of purines, thymidylate, methionine, and other important biomolecules. Also exhibits THF-independent aldolase activity toward beta-hydroxyamino acids, producing glycine and aldehydes, via a retro-aldol mechanism. The sequence is that of Serine hydroxymethyltransferase from Verminephrobacter eiseniae (strain EF01-2).